The following is a 286-amino-acid chain: Forkhead box protein E3 (286 aa).

Residues 1–62 (MDAHVAFSGF…GRRRRRPLQR (62 aa)) are disordered. The fork-head DNA-binding region spans 64–158 (KPPYSYIALI…DNGSFLRRRK (95 aa)).

The protein localises to the nucleus. Transcription factor that controls lens epithelial cell growth through regulation of proliferation, apoptosis and cell cycle. During lens development, controls the ratio of the lens fiber cells to the cells of the anterior lens epithelium by regulating the rate of proliferation and differentiation. Controls lens vesicle closure and subsequent separation of the lens vesicle from ectoderm. Controls the expression of DNAJB1 in a pathway that is crucial for the development of the anterior segment of the eye. The protein is Forkhead box protein E3 (Foxe3) of Rattus norvegicus (Rat).